The following is a 277-amino-acid chain: Diaminopimelate epimerase (277 aa).

Substrate is bound by residues asparagine 13, glutamine 46, and asparagine 66. Cysteine 75 (proton donor) is an active-site residue. Substrate contacts are provided by residues glycine 76–asparagine 77, asparagine 160, asparagine 193, and glutamate 211–arginine 212. Catalysis depends on cysteine 220, which acts as the Proton acceptor. A substrate-binding site is contributed by glycine 221 to threonine 222.

Belongs to the diaminopimelate epimerase family. In terms of assembly, homodimer.

It localises to the cytoplasm. It carries out the reaction (2S,6S)-2,6-diaminopimelate = meso-2,6-diaminopimelate. Its pathway is amino-acid biosynthesis; L-lysine biosynthesis via DAP pathway; DL-2,6-diaminopimelate from LL-2,6-diaminopimelate: step 1/1. Its function is as follows. Catalyzes the stereoinversion of LL-2,6-diaminopimelate (L,L-DAP) to meso-diaminopimelate (meso-DAP), a precursor of L-lysine and an essential component of the bacterial peptidoglycan. In Saccharophagus degradans (strain 2-40 / ATCC 43961 / DSM 17024), this protein is Diaminopimelate epimerase.